Here is a 33-residue protein sequence, read N- to C-terminus: Alpha-amanitin proprotein 2 (33 aa).

Residues 1–10 constitute a propeptide that is removed on maturation; sequence MSDINATRLP. At Ile11 the chain carries (3R,4R)-4,5-dihydroxyisoleucine; in form alpha-amanitin. A (3R,4S)-4-hydroxyisoleucine; in form gamma-amanitin modification is found at Ile11. The cyclopeptide (Ile-Pro) cross-link spans 11–18; sequence IWGIGCNP. Residues 12 to 16 constitute a cross-link (2'-cysteinyl-6'-hydroxytryptophan sulfoxide (Trp-Cys)); the sequence is WGIGC. Residue Pro18 is modified to 4-hydroxyproline. A propeptide spanning residues 19-33 is cleaved from the precursor; sequence CVGDDVTSVLTRGEA.

The protein belongs to the MSDIN fungal toxin family. In terms of processing, processed by the macrocyclase-peptidase enzyme POPB to yield a toxic cyclic octapeptide. POPB first removes 10 residues from the N-terminus. Conformational trapping of the remaining peptide forces the enzyme to release this intermediate rather than proceed to macrocyclization. The enzyme rebinds the remaining peptide in a different conformation and catalyzes macrocyclization of the N-terminal 8 residues. Expressed in basidiocarps.

Major toxin belonging to the bicyclic octapeptides amatoxins that acts by binding non-competitively to RNA polymerase II and greatly slowing the elongation of transcripts from target promoters. The protein is Alpha-amanitin proprotein 2 of Amanita exitialis (Guangzhou destroying angel).